The primary structure comprises 112 residues: Ribonuclease P protein component (112 aa).

This sequence belongs to the RnpA family. In terms of assembly, consists of a catalytic RNA component (M1 or rnpB) and a protein subunit.

It catalyses the reaction Endonucleolytic cleavage of RNA, removing 5'-extranucleotides from tRNA precursor.. Functionally, RNaseP catalyzes the removal of the 5'-leader sequence from pre-tRNA to produce the mature 5'-terminus. It can also cleave other RNA substrates such as 4.5S RNA. The protein component plays an auxiliary but essential role in vivo by binding to the 5'-leader sequence and broadening the substrate specificity of the ribozyme. The protein is Ribonuclease P protein component of Mycoplasma mobile (strain ATCC 43663 / 163K / NCTC 11711) (Mesomycoplasma mobile).